A 278-amino-acid polypeptide reads, in one-letter code: Formamidopyrimidine-DNA glycosylase (278 aa).

The active-site Schiff-base intermediate with DNA is proline 2. Glutamate 3 serves as the catalytic Proton donor. Lysine 60 serves as the catalytic Proton donor; for beta-elimination activity. Histidine 95 and arginine 114 together coordinate DNA. An FPG-type zinc finger spans residues 244 to 278 (WVYRRGGEPCRRCGTIIRRDKLSGRSTHWCPTCQG). Arginine 268 (proton donor; for delta-elimination activity) is an active-site residue.

The protein belongs to the FPG family. In terms of assembly, monomer. Zn(2+) is required as a cofactor.

The enzyme catalyses Hydrolysis of DNA containing ring-opened 7-methylguanine residues, releasing 2,6-diamino-4-hydroxy-5-(N-methyl)formamidopyrimidine.. The catalysed reaction is 2'-deoxyribonucleotide-(2'-deoxyribose 5'-phosphate)-2'-deoxyribonucleotide-DNA = a 3'-end 2'-deoxyribonucleotide-(2,3-dehydro-2,3-deoxyribose 5'-phosphate)-DNA + a 5'-end 5'-phospho-2'-deoxyribonucleoside-DNA + H(+). In terms of biological role, involved in base excision repair of DNA damaged by oxidation or by mutagenic agents. Acts as a DNA glycosylase that recognizes and removes damaged bases. Has a preference for oxidized purines, such as 7,8-dihydro-8-oxoguanine (8-oxoG). Has AP (apurinic/apyrimidinic) lyase activity and introduces nicks in the DNA strand. Cleaves the DNA backbone by beta-delta elimination to generate a single-strand break at the site of the removed base with both 3'- and 5'-phosphates. This is Formamidopyrimidine-DNA glycosylase from Parasynechococcus marenigrum (strain WH8102).